The chain runs to 125 residues: Histone H2A.v3 (125 aa).

It belongs to the histone H2A family. The nucleosome is a histone octamer containing two molecules each of H2A, H2B, H3 and H4 assembled in one H3-H4 heterotetramer and two H2A-H2B heterodimers. The octamer wraps approximately 147 bp of DNA.

It is found in the nucleus. Its subcellular location is the chromosome. Core component of nucleosome which plays a central role in DNA double strand break (DSB) repair. Nucleosomes wrap and compact DNA into chromatin, limiting DNA accessibility to the cellular machineries which require DNA as a template. Histones thereby play a central role in transcription regulation, DNA repair, DNA replication and chromosomal stability. DNA accessibility is regulated via a complex set of post-translational modifications of histones, also called histone code, and nucleosome remodeling. This chain is Histone H2A.v3 (H2Av3), found in Dictyostelium discoideum (Social amoeba).